The sequence spans 386 residues: Nucleosome assembly protein 1-like 4 (386 aa).

The interval 1–29 (MADNSFSDGVPSDSLEAAKNASNTEKLTD) is disordered. A2 bears the N-acetylalanine mark. Phosphoserine is present on residues S5, S7, and S12. A compositionally biased stretch (polar residues) spans 20–29 (NASNTEKLTD). At S49 the chain carries Phosphoserine. T51 is subject to Phosphothreonine. Residues S53 and S54 each carry the phosphoserine modification. At T58 the chain carries Phosphothreonine. Position 105 is an N6-acetyllysine (K105). A Phosphoserine modification is found at S125. The residue at position 146 (K146) is an N6-acetyllysine. The Nuclear localization signal motif lies at 265 to 271 (IKKKQKH). S304 bears the Phosphoserine mark. The segment covering 339-370 (AIEDDDNFEEGEEGEEEELEGDEEAEDDDDAE) has biased composition (acidic residues). Positions 339–386 (AIEDDDNFEEGEEGEEEELEGDEEAEDDDDAEINPKKEPSQPSECKQQ) are disordered.

This sequence belongs to the nucleosome assembly protein (NAP) family. As to quaternary structure, interacts with core (H2A, H2B, H3, H4) and linker (H1) histones. In terms of processing, polyglutamylated and polyglycylated. These 2 modifications occur exclusively on glutamate residues and result in either polyglutamate or polyglycine chains on the gamma-carboxyl group. Both modifications can coexist on the same protein on adjacent residues, and lowering polyglycylation levels increases polyglutamylation, and reciprocally. Polyglutamylated by TTLL4. Post-translationally, phosphorylated at the G0/G1 boundary but it is not phosphorylated in S-phase. Phosphorylated protein remains in the cytoplasm in a complex with histones during the G0/G1 transition, whereas dephosphorylation triggers its transport into the nucleus at the G1/S-boundary.

It is found in the nucleus. Its subcellular location is the cytoplasm. Functionally, acts as a histone chaperone in nucleosome assembly. In Bos taurus (Bovine), this protein is Nucleosome assembly protein 1-like 4 (NAP1L4).